A 79-amino-acid chain; its full sequence is Exodeoxyribonuclease 7 small subunit (79 aa).

This sequence belongs to the XseB family. In terms of assembly, heterooligomer composed of large and small subunits.

It is found in the cytoplasm. It carries out the reaction Exonucleolytic cleavage in either 5'- to 3'- or 3'- to 5'-direction to yield nucleoside 5'-phosphates.. Its function is as follows. Bidirectionally degrades single-stranded DNA into large acid-insoluble oligonucleotides, which are then degraded further into small acid-soluble oligonucleotides. This is Exodeoxyribonuclease 7 small subunit from Shouchella clausii (strain KSM-K16) (Alkalihalobacillus clausii).